The following is a 952-amino-acid chain: Probable outer membrane protein pmp16 (952 aa).

A signal peptide spans 1 to 27; it reads MSKTPPKFLFYLGNFTACMFGMTPAVY. The 307-residue stretch at 646-952 folds into the Autotransporter domain; sequence GDLATTPLWQ…HLQAGSTLKF (307 aa).

Belongs to the PMP outer membrane protein family.

The protein resides in the secreted. The protein localises to the cell wall. It is found in the cell outer membrane. In Chlamydia pneumoniae (Chlamydophila pneumoniae), this protein is Probable outer membrane protein pmp16 (pmp16).